We begin with the raw amino-acid sequence, 311 residues long: 4-diphosphocytidyl-2-C-methyl-D-erythritol kinase (311 aa).

The active site involves lysine 11. 94–104 (PVAAGLAGGSA) is a binding site for ATP. Residue aspartate 136 is part of the active site.

It belongs to the GHMP kinase family. IspE subfamily.

The catalysed reaction is 4-CDP-2-C-methyl-D-erythritol + ATP = 4-CDP-2-C-methyl-D-erythritol 2-phosphate + ADP + H(+). Its pathway is isoprenoid biosynthesis; isopentenyl diphosphate biosynthesis via DXP pathway; isopentenyl diphosphate from 1-deoxy-D-xylulose 5-phosphate: step 3/6. Catalyzes the phosphorylation of the position 2 hydroxy group of 4-diphosphocytidyl-2C-methyl-D-erythritol. This chain is 4-diphosphocytidyl-2-C-methyl-D-erythritol kinase, found in Synechococcus sp. (strain JA-2-3B'a(2-13)) (Cyanobacteria bacterium Yellowstone B-Prime).